We begin with the raw amino-acid sequence, 102 residues long: Protein translation factor SUI1 homolog (102 aa).

It belongs to the SUI1 family.

This is Protein translation factor SUI1 homolog from Cenarchaeum symbiosum (strain A).